The primary structure comprises 383 residues: Inactive serine protease 54 (383 aa).

A signal peptide spans 1–20 (MAEMRGMLLMLLYISHSSSA). One can recognise a Peptidase S1 domain in the interval 21 to 258 (ICGIQKATIA…YSDWITAKTR (238 aa)). Asn113 carries an N-linked (GlcNAc...) asparagine glycan. Intrachain disulfides connect Cys154–Cys216, Cys185–Cys195, and Cys206–Cys237. Residues 305-334 (QGQRMSTKSNKQKDAGQNFRVNRQPETSGP) are disordered. Residues 323 to 334 (FRVNRQPETSGP) are compositionally biased toward polar residues.

Belongs to the peptidase S1 family. Plasma kallikrein subfamily.

The protein localises to the secreted. This is Inactive serine protease 54 (Prss54) from Mus musculus (Mouse).